The chain runs to 206 residues: Translation initiation factor IF-3 (206 aa).

It belongs to the IF-3 family. As to quaternary structure, monomer.

The protein localises to the cytoplasm. Functionally, IF-3 binds to the 30S ribosomal subunit and shifts the equilibrium between 70S ribosomes and their 50S and 30S subunits in favor of the free subunits, thus enhancing the availability of 30S subunits on which protein synthesis initiation begins. In Shigella flexneri, this protein is Translation initiation factor IF-3.